The primary structure comprises 121 residues: Conopressin-conophysin (121 aa).

Positions 1–20 (MGRLTMALCWLLLLLLTTQA) are cleaved as a signal peptide. Cysteine 21 and cysteine 26 form a disulfide bridge. Proline 27 is modified (4-hydroxyproline; partial; in Conopressin-ba1c). Glycine 29 carries the post-translational modification Glycine amide. 7 cysteine pairs are disulfide-bonded: cysteine 43-cysteine 83, cysteine 46-cysteine 57, cysteine 51-cysteine 73, cysteine 58-cysteine 63, cysteine 90-cysteine 108, cysteine 102-cysteine 120, and cysteine 109-cysteine 114.

It belongs to the vasopressin/oxytocin family. Expressed by the venom duct.

It localises to the secreted. The sequence is that of Conopressin-conophysin from Conus bayani (Bayan's cone).